The primary structure comprises 346 residues: N-acetyl-gamma-glutamyl-phosphate reductase (346 aa).

Cys-149 is an active-site residue.

It belongs to the NAGSA dehydrogenase family. Type 1 subfamily.

Its subcellular location is the cytoplasm. The catalysed reaction is N-acetyl-L-glutamate 5-semialdehyde + phosphate + NADP(+) = N-acetyl-L-glutamyl 5-phosphate + NADPH + H(+). It functions in the pathway amino-acid biosynthesis; L-arginine biosynthesis; N(2)-acetyl-L-ornithine from L-glutamate: step 3/4. Catalyzes the NADPH-dependent reduction of N-acetyl-5-glutamyl phosphate to yield N-acetyl-L-glutamate 5-semialdehyde. The chain is N-acetyl-gamma-glutamyl-phosphate reductase from Pelobacter propionicus (strain DSM 2379 / NBRC 103807 / OttBd1).